A 407-amino-acid chain; its full sequence is FMN-dependent alpha-hydroxy acid dehydrogenase PB1A11.03 (407 aa).

An FMN hydroxy acid dehydrogenase domain is found at 28-406; sequence QRPQITVDGR…DLNRDVLYKE (379 aa). Y54 contacts a 2-oxocarboxylate. 2 residues coordinate FMN: S136 and Q158. Y160 provides a ligand contact to a 2-oxocarboxylate. T188 serves as a coordination point for FMN. R197 contacts a 2-oxocarboxylate. K277 serves as a coordination point for FMN. The active-site Proton acceptor is H301. An a 2-oxocarboxylate-binding site is contributed by R304. FMN contacts are provided by residues 332–336 and 355–356; these read DSGVR and GR.

This sequence belongs to the FMN-dependent alpha-hydroxy acid dehydrogenase family. The cofactor is FMN.

It is found in the cytoplasm. The protein resides in the nucleus. The polypeptide is FMN-dependent alpha-hydroxy acid dehydrogenase PB1A11.03 (Schizosaccharomyces pombe (strain 972 / ATCC 24843) (Fission yeast)).